Reading from the N-terminus, the 284-residue chain is Expansin-A17 (284 aa).

A signal peptide spans 1-21 (MASSWNNPAIFLAAALAVATA). An Expansin-like EG45 domain is found at 71 to 185 (GGACGYVSND…RRVPCQRTGG (115 aa)). The Expansin-like CBD domain occupies 195 to 279 (YWLLLYVMNV…WWITGLCYQG (85 aa)).

This sequence belongs to the expansin family. Expansin A subfamily. As to expression, expressed in roots.

It is found in the secreted. The protein resides in the cell wall. The protein localises to the membrane. May cause loosening and extension of plant cell walls by disrupting non-covalent bonding between cellulose microfibrils and matrix glucans. No enzymatic activity has been found. May be required for rapid internodal elongation in deepwater rice during submergence. This Oryza sativa subsp. japonica (Rice) protein is Expansin-A17 (EXPA17).